The following is a 261-amino-acid chain: Cytochrome c oxidase subunit 3 (261 aa).

At 1–15 (MTHQTHAYHMVNPSP) the chain is on the mitochondrial matrix side. Residues 16-34 (WPLTGALSALLMTSGLAMW) traverse the membrane as a helical segment. Residues 35 to 40 (FHFNST) lie on the Mitochondrial intermembrane side of the membrane. The chain crosses the membrane as a helical span at residues 41-66 (ILLMIGLTTNTLTMYQWWRDVIREST). Topologically, residues 67–72 (FQGHHT) are mitochondrial matrix. The chain crosses the membrane as a helical span at residues 73 to 105 (PTVQKGLRYGMILFIISEVLFFTGFFWAFYHSS). Residues 106 to 128 (LAPTPELGGCWPPTGIHPLNPLE) are Mitochondrial intermembrane-facing. Residues 129 to 152 (VPLLNTSVLLASGVSITWAHHSLM) form a helical membrane-spanning segment. Over 153 to 155 (EGN) the chain is Mitochondrial matrix. The chain crosses the membrane as a helical span at residues 156 to 183 (RYPMLQALFITIALGVYFTLLQASEYYE). The Mitochondrial intermembrane portion of the chain corresponds to 184 to 190 (APFTISD). Residues 191-223 (GIYGSTFFVATGFHGLHVIIGSTFLIVCFFRQL) traverse the membrane as a helical segment. Topologically, residues 224–232 (KFHFTSNHH) are mitochondrial matrix. Residues 233–256 (FGFEAAAWYWHFVDVVWLFLYVSI) form a helical membrane-spanning segment. The Mitochondrial intermembrane portion of the chain corresponds to 257-261 (YWWGS).

Belongs to the cytochrome c oxidase subunit 3 family. As to quaternary structure, component of the cytochrome c oxidase (complex IV, CIV), a multisubunit enzyme composed of 14 subunits. The complex is composed of a catalytic core of 3 subunits MT-CO1, MT-CO2 and MT-CO3, encoded in the mitochondrial DNA, and 11 supernumerary subunits COX4I, COX5A, COX5B, COX6A, COX6B, COX6C, COX7A, COX7B, COX7C, COX8 and NDUFA4, which are encoded in the nuclear genome. The complex exists as a monomer or a dimer and forms supercomplexes (SCs) in the inner mitochondrial membrane with NADH-ubiquinone oxidoreductase (complex I, CI) and ubiquinol-cytochrome c oxidoreductase (cytochrome b-c1 complex, complex III, CIII), resulting in different assemblies (supercomplex SCI(1)III(2)IV(1) and megacomplex MCI(2)III(2)IV(2)).

The protein localises to the mitochondrion inner membrane. It carries out the reaction 4 Fe(II)-[cytochrome c] + O2 + 8 H(+)(in) = 4 Fe(III)-[cytochrome c] + 2 H2O + 4 H(+)(out). Functionally, component of the cytochrome c oxidase, the last enzyme in the mitochondrial electron transport chain which drives oxidative phosphorylation. The respiratory chain contains 3 multisubunit complexes succinate dehydrogenase (complex II, CII), ubiquinol-cytochrome c oxidoreductase (cytochrome b-c1 complex, complex III, CIII) and cytochrome c oxidase (complex IV, CIV), that cooperate to transfer electrons derived from NADH and succinate to molecular oxygen, creating an electrochemical gradient over the inner membrane that drives transmembrane transport and the ATP synthase. Cytochrome c oxidase is the component of the respiratory chain that catalyzes the reduction of oxygen to water. Electrons originating from reduced cytochrome c in the intermembrane space (IMS) are transferred via the dinuclear copper A center (CU(A)) of subunit 2 and heme A of subunit 1 to the active site in subunit 1, a binuclear center (BNC) formed by heme A3 and copper B (CU(B)). The BNC reduces molecular oxygen to 2 water molecules using 4 electrons from cytochrome c in the IMS and 4 protons from the mitochondrial matrix. This Raphicerus melanotis (Cape grysbok) protein is Cytochrome c oxidase subunit 3 (MT-CO3).